Here is a 178-residue protein sequence, read N- to C-terminus: N-alpha-acetyltransferase 20 (178 aa).

One can recognise an N-acetyltransferase domain in the interval 2-157 (TTLRAFTCDD…DAYDMRKALS (156 aa)). The tract at residues 159-178 (DTEKKSIVPLPHPVRPEDIE) is disordered.

This sequence belongs to the acetyltransferase family. ARD1 subfamily. Component of the N-terminal acetyltransferase B (NatB) complex which is composed of naa20 and naa25.

The protein resides in the cytoplasm. Its subcellular location is the nucleus. The catalysed reaction is N-terminal L-methionyl-L-asparaginyl-[protein] + acetyl-CoA = N-terminal N(alpha)-acetyl-L-methionyl-L-asparaginyl-[protein] + CoA + H(+). It carries out the reaction N-terminal L-methionyl-L-glutaminyl-[protein] + acetyl-CoA = N-terminal N(alpha)-acetyl-L-methionyl-L-glutaminyl-[protein] + CoA + H(+). It catalyses the reaction N-terminal L-methionyl-L-aspartyl-[protein] + acetyl-CoA = N-terminal N(alpha)-acetyl-L-methionyl-L-aspartyl-[protein] + CoA + H(+). The enzyme catalyses N-terminal L-methionyl-L-glutamyl-[protein] + acetyl-CoA = N-terminal N(alpha)-acetyl-L-methionyl-L-glutamyl-[protein] + CoA + H(+). Its function is as follows. Catalytic subunit of the NatB complex which catalyzes acetylation of the N-terminal methionine residues of peptides beginning with Met-Asp, Met-Glu, Met-Asn and Met-Gln. Proteins with cell cycle functions are overrepresented in the pool of NatB substrates. Required for maintaining the structure and function of actomyosin fibers and for proper cellular migration. In Xenopus laevis (African clawed frog), this protein is N-alpha-acetyltransferase 20 (naa20).